The chain runs to 307 residues: Zinc transporter ZIP9 (307 aa).

Residues 4–24 (FISISLLSLAMLVGCYVAGII) form a helical membrane-spanning segment. A glycan (N-linked (GlcNAc...) asparagine) is linked at asparagine 29. A run of 5 helical transmembrane segments spans residues 35-55 (LKLV…AVIV), 106-126 (AYIG…DQIG), 146-166 (ITTT…LGAA), 176-196 (LIVF…LVSF), and 210-230 (HLLV…LGLS). Asparagine 241 is a glycosylation site (N-linked (GlcNAc...) asparagine). 2 consecutive transmembrane segments (helical) span residues 244–264 (GVAM…HVLP) and 286–306 (LEVA…VGHQ).

Belongs to the ZIP transporter (TC 2.A.5) family. Highly expressed in pancreas, testis, and pituitary and moderately in the kidney, liver, uterus, heart, prostate, and brain, whereas expression is lower in the ovary and colon.

The protein resides in the golgi apparatus. It is found in the trans-Golgi network membrane. Its subcellular location is the cell membrane. It localises to the cytoplasm. The protein localises to the perinuclear region. The protein resides in the mitochondrion. It is found in the nucleus. It carries out the reaction Zn(2+)(in) = Zn(2+)(out). Functionally, transports zinc ions across cell and organelle membranes into the cytoplasm and regulates intracellular zinc homeostasis. Participates in the zinc ions efflux out of the secretory compartments. Regulates intracellular zinc level, resulting in the enhancement of AKT1 and MAPK3/MAPK1 (Erk1/2) phosphorylation in response to the BCR activation. Also functions as a membrane androgen receptor that mediates, through a G protein, the non-classical androgen signaling pathway, characterized by the activation of MAPK3/MAPK1 (Erk1/2) and transcription factors CREB1 or ATF1. This pathway contributes to CLDN1 and CLDN5 expression and tight junction formation between adjacent Sertoli cells. Mediates androgen-induced vascular endothelial cell proliferation through activation of an inhibitory G protein leading to the AKT1 and MAPK3/MAPK1 (Erk1/2) activation which in turn modulate inhibition (phosphorylation) of GSK3B and CCND1 transcription. Moreover, has dual functions as a membrane-bound androgen receptor and as an androgen-dependent zinc transporter both of which are mediated through an inhibitory G protein (Gi) that mediates both MAP kinase and zinc signaling leading to the androgen-dependent apoptotic process. In Homo sapiens (Human), this protein is Zinc transporter ZIP9.